A 273-amino-acid chain; its full sequence is NADPH-dependent 7-cyano-7-deazaguanine reductase (273 aa).

81–83 contributes to the substrate binding site; the sequence is VES. 83-84 provides a ligand contact to NADPH; it reads SK. The active-site Thioimide intermediate is the C179. D186 functions as the Proton donor in the catalytic mechanism. Residue 218–219 participates in substrate binding; sequence AE. An NADPH-binding site is contributed by 247–248; it reads RG.

This sequence belongs to the GTP cyclohydrolase I family. QueF type 2 subfamily. Homodimer.

It localises to the cytoplasm. The catalysed reaction is 7-aminomethyl-7-carbaguanine + 2 NADP(+) = 7-cyano-7-deazaguanine + 2 NADPH + 3 H(+). It functions in the pathway tRNA modification; tRNA-queuosine biosynthesis. Functionally, catalyzes the NADPH-dependent reduction of 7-cyano-7-deazaguanine (preQ0) to 7-aminomethyl-7-deazaguanine (preQ1). The sequence is that of NADPH-dependent 7-cyano-7-deazaguanine reductase from Rickettsia felis (strain ATCC VR-1525 / URRWXCal2) (Rickettsia azadi).